The following is a 464-amino-acid chain: GDNF family receptor alpha-2 (464 aa).

The signal sequence occupies residues 1 to 21; sequence MILANAFCLFFFLDETLRSLA. Cystine bridges form between cysteine 40/cysteine 93, cysteine 47/cysteine 53, cysteine 63/cysteine 78, cysteine 95/cysteine 105, cysteine 161/cysteine 222, cysteine 168/cysteine 174, cysteine 185/cysteine 200, cysteine 195/cysteine 241, cysteine 224/cysteine 229, cysteine 251/cysteine 323, cysteine 258/cysteine 264, cysteine 275/cysteine 293, cysteine 285/cysteine 347, and cysteine 325/cysteine 335. Asparagine 52 carries an N-linked (GlcNAc...) asparagine glycan. Asparagine 357 is a glycosylation site (N-linked (GlcNAc...) asparagine). The span at 360–374 shows a compositional bias: polar residues; the sequence is DVNLSPKSPPFQATQ. The interval 360 to 392 is disordered; the sequence is DVNLSPKSPPFQATQAPRVDKTPSLPDDLSDST. Positions 381–392 are enriched in low complexity; it reads TPSLPDDLSDST. Asparagine 413 carries N-linked (GlcNAc...) asparagine glycosylation. Asparagine 440 carries GPI-anchor amidated asparagine lipidation. Positions 441–464 are cleaved as a propeptide — removed in mature form; the sequence is SGPRRTRPSAALTAASFLMLKLAL.

Belongs to the GDNFR family. In terms of assembly, interacts with NRTN ligand and RET: forms a 2:2:2 ternary complex composed of NRTN ligand, GFRA2 and RET receptor. Also forms a 4:4:4 tetrameric complex composed of 4 copies of NRTN ligand, GFRA2 and RET receptor, which prevents endocytosis of RET. Interacts with SORL1.

It is found in the cell membrane. Functionally, receptor for neurturin (NRTN), a growth factor that supports the survival of sympathetic neurons. NRTN-binding leads to autophosphorylation and activation of the RET receptor. Also able to mediate GDNF signaling through the RET tyrosine kinase receptor. The sequence is that of GDNF family receptor alpha-2 (GFRA2) from Bos taurus (Bovine).